Consider the following 104-residue polypeptide: uncharacterized protein (104 aa).

The interval 55–104 (RPFSSDRINRPFSPDKKGEPIFPDKRDRPFSPDRINRPFSPDKKGEPIFP) is disordered.

It is found in the plastid. This is an uncharacterized protein from Euglena longa (Euglenophycean alga).